Reading from the N-terminus, the 1774-residue chain is 6-methylsalicylic acid synthase (1774 aa).

Residues 1-14 (MHSAATSTYPSGKT) show a composition bias toward polar residues. Positions 1–21 (MHSAATSTYPSGKTSPAPVGT) are disordered. In terms of domain architecture, Ketosynthase family 3 (KS3) spans 32 to 457 (SNDVAVVGMA…GTVSHAVIEE (426 aa)). The segment at 186-238 (RISYHLNLMGPSTAVDAACASSLVAIHHGVQAIRLGESKVAIVGGVNALCGPG) is acyltransferase. Catalysis depends on for beta-ketoacyl synthase activity residues Cys-204, His-339, and His-379. Positions 642–676 (NGITPQAVIGHSVGEIAASVVAGALSPAEGALIVT) are acetyl/malonyl transferases. Residue Ser-653 is the For malonyltransferase activity of the active site. The N-terminal hotdog fold stretch occupies residues 926–1045 (HTLLGQRIPV…AYWDRKVAGS (120 aa)). One can recognise a PKS/mFAS DH domain in the interval 926 to 1202 (HTLLGQRIPV…FSEIEGTPGV (277 aa)). His-958 functions as the Proton acceptor; for dehydratase activity in the catalytic mechanism. The interval 1059 to 1202 (VTKLADNFSI…FSEIEGTPGV (144 aa)) is C-terminal hotdog fold. The active-site Proton donor; for dehydratase activity is the Asp-1123. Positions 1403–1450 (GPRLLPRPEGTYLITGGLGVLGLEVADFLVEKGARRLLLISRRALPPR) are 2-oxoacyl reductase. 1419–1424 (GLGVLG) provides a ligand contact to NADP(+). The 75-residue stretch at 1698–1772 (AYLDEKIRGC…HLAVWFAEKL (75 aa)) folds into the Carrier domain. Ser-1732 carries the post-translational modification O-(pantetheine 4'-phosphoryl)serine.

In terms of assembly, homomultimer.

The enzyme catalyses 3 malonyl-CoA + acetyl-CoA + NADPH + 3 H(+) = 6-methylsalicylate + 3 CO2 + NADP(+) + 4 CoA + H2O. Its pathway is mycotoxin biosynthesis; patulin biosynthesis. Its function is as follows. This multifunctional enzyme is a polyketide synthase. It catalyzes a total of 11 steps by seven different component enzymes, in the biosynthesis of the antibiotic patulin. This Penicillium patulum (Penicillium griseofulvum) protein is 6-methylsalicylic acid synthase.